We begin with the raw amino-acid sequence, 241 residues long: Glucosamine-6-phosphate deaminase (241 aa).

Asp67 acts as the Proton acceptor; for enolization step in catalysis. Asn136 acts as the For ring-opening step in catalysis. Catalysis depends on His138, which acts as the Proton acceptor; for ring-opening step. Glu143 acts as the For ring-opening step in catalysis.

The protein belongs to the glucosamine/galactosamine-6-phosphate isomerase family. NagB subfamily.

It catalyses the reaction alpha-D-glucosamine 6-phosphate + H2O = beta-D-fructose 6-phosphate + NH4(+). Its pathway is amino-sugar metabolism; N-acetylneuraminate degradation; D-fructose 6-phosphate from N-acetylneuraminate: step 5/5. Catalyzes the reversible isomerization-deamination of glucosamine 6-phosphate (GlcN6P) to form fructose 6-phosphate (Fru6P) and ammonium ion. This Clostridium novyi (strain NT) protein is Glucosamine-6-phosphate deaminase.